A 249-amino-acid polypeptide reads, in one-letter code: Putative TrmH family tRNA/rRNA methyltransferase (249 aa).

The S-adenosyl-L-methionine site is built by glycine 196, isoleucine 216, and leucine 225.

The protein belongs to the class IV-like SAM-binding methyltransferase superfamily. RNA methyltransferase TrmH family.

This is Putative TrmH family tRNA/rRNA methyltransferase from Staphylococcus haemolyticus (strain JCSC1435).